The sequence spans 374 residues: Putative F-box/kelch-repeat protein At4g39756 (374 aa).

Residues 17 to 63 enclose the F-box domain; sequence CPSFLSLPEEILVNCLARIPKSYYPKLSLVCKSFCSLILSMELYVER. 4 Kelch repeats span residues 135-180, 181-227, 231-278, and 280-308; these read ELYA…VING, KIYV…GMAV, KIYV…RQSC, and WYDTKHKEWRDIKGLATLNRRRRSSILEV.

This is Putative F-box/kelch-repeat protein At4g39756 from Arabidopsis thaliana (Mouse-ear cress).